The following is a 558-amino-acid chain: CTP synthase (558 aa).

The segment at 1-271 is amidoligase domain; sequence MAARQQTKHL…DAYVVRRLGL (271 aa). Serine 18 lines the CTP pocket. Serine 18 contacts UTP. ATP contacts are provided by residues 19 to 24 and aspartate 76; that span reads SLGKGL. Mg(2+) contacts are provided by aspartate 76 and glutamate 145. Residues 152 to 154, 192 to 197, and lysine 228 each bind CTP; these read DIE and KTKPTQ. Residues 192–197 and lysine 228 contribute to the UTP site; that span reads KTKPTQ. The 250-residue stretch at 296-545 folds into the Glutamine amidotransferase type-1 domain; the sequence is TIALVGKYVD…IRAALLHRCP (250 aa). Glycine 359 serves as a coordination point for L-glutamine. The Nucleophile; for glutamine hydrolysis role is filled by cysteine 386. Residues 387 to 390, glutamate 410, and arginine 471 each bind L-glutamine; that span reads LGLQ. Active-site residues include histidine 518 and glutamate 520.

The protein belongs to the CTP synthase family. As to quaternary structure, homotetramer.

The enzyme catalyses UTP + L-glutamine + ATP + H2O = CTP + L-glutamate + ADP + phosphate + 2 H(+). It catalyses the reaction L-glutamine + H2O = L-glutamate + NH4(+). It carries out the reaction UTP + NH4(+) + ATP = CTP + ADP + phosphate + 2 H(+). The protein operates within pyrimidine metabolism; CTP biosynthesis via de novo pathway; CTP from UDP: step 2/2. Allosterically activated by GTP, when glutamine is the substrate; GTP has no effect on the reaction when ammonia is the substrate. The allosteric effector GTP functions by stabilizing the protein conformation that binds the tetrahedral intermediate(s) formed during glutamine hydrolysis. Inhibited by the product CTP, via allosteric rather than competitive inhibition. Catalyzes the ATP-dependent amination of UTP to CTP with either L-glutamine or ammonia as the source of nitrogen. Regulates intracellular CTP levels through interactions with the four ribonucleotide triphosphates. The protein is CTP synthase of Acidothermus cellulolyticus (strain ATCC 43068 / DSM 8971 / 11B).